The sequence spans 264 residues: Apolipoprotein A-I (264 aa).

An N-terminal signal peptide occupies residues 1–18 (MKTVVLAVAVLFLTGSQA). 2 consecutive repeat copies span residues 67 to 88 (LNLLENWDTLGSTVGRLQEQLG) and 89 to 110 (PVTQEFWDNLEKETEWLRREMN). The tract at residues 67-264 (LNLLENWDTL…EEASKKLNAQ (198 aa)) is 10 X approximate tandem repeats. Position 109 is a methionine sulfoxide (Met-109). Residues 111–121 (KDLEEVKAKVQ) form a 3; half-length repeat. Repeat copies occupy residues 122–143 (PYLDQFQTKWQEEVALYRQKME), 144–165 (PLGAELRDGARQKLQELQEKLT), 166–187 (PLGEDLRDRMRHHVDALRTKMT), 188–207 (PYSDQMRDRLAERLAQLKDS), and 208–229 (PTLAEYHTKAADHLKAFGEKAK). Methionine sulfoxide is present on Met-193. The stretch at 230–240 (PALEDLRQGLM) is one 9; half-length repeat. At Met-240 the chain carries Methionine sulfoxide. Copy 10 of the repeat occupies 241–264 (PVFESFKTRIMSMVEEASKKLNAQ).

The protein belongs to the apolipoprotein A1/A4/E family. As to quaternary structure, homodimer. Interacts with APOA1BP and CLU. Component of a sperm activating protein complex (SPAP), consisting of APOA1, an immunoglobulin heavy chain, an immunoglobulin light chain and albumin. Interacts with NDRG1. Interacts with SCGB3A2. Interacts with NAXE and YJEFN3. In terms of processing, glycosylated. Post-translationally, palmitoylated. Phosphorylation sites are present in the extracellular medium. In terms of tissue distribution, major protein of plasma HDL, also found in chylomicrons.

The protein resides in the secreted. Participates in the reverse transport of cholesterol from tissues to the liver for excretion by promoting cholesterol efflux from tissues and by acting as a cofactor for the lecithin cholesterol acyltransferase (LCAT). As part of the SPAP complex, activates spermatozoa motility. This Mesocricetus auratus (Golden hamster) protein is Apolipoprotein A-I (APOAI).